We begin with the raw amino-acid sequence, 436 residues long: Adenylosuccinate synthetase (436 aa).

Residues Gly12 to Lys18 and Gly40 to Thr42 each bind GTP. Asp13 (proton acceptor) is an active-site residue. The Mg(2+) site is built by Asp13 and Gly40. IMP-binding positions include Asp13 to Lys16, Asn38 to His41, Thr128, Arg142, Gln223, Thr238, and Arg302. His41 (proton donor) is an active-site residue. A substrate-binding site is contributed by Thr298–Arg304. GTP contacts are provided by residues Arg304, Lys330–Asp332, and Ser412–Gly414.

Belongs to the adenylosuccinate synthetase family. Homodimer. It depends on Mg(2+) as a cofactor.

It is found in the cytoplasm. The enzyme catalyses IMP + L-aspartate + GTP = N(6)-(1,2-dicarboxyethyl)-AMP + GDP + phosphate + 2 H(+). It participates in purine metabolism; AMP biosynthesis via de novo pathway; AMP from IMP: step 1/2. Its function is as follows. Plays an important role in the de novo pathway of purine nucleotide biosynthesis. Catalyzes the first committed step in the biosynthesis of AMP from IMP. This is Adenylosuccinate synthetase from Prochlorococcus marinus (strain AS9601).